The sequence spans 357 residues: 3-dehydroquinate synthase (357 aa).

NAD(+)-binding positions include 69–74 (DGEQFK), 103–107 (GVVGD), 127–128 (TT), Lys140, Lys149, and 167–170 (CLQT). Positions 182, 245, and 262 each coordinate Zn(2+).

It belongs to the sugar phosphate cyclases superfamily. Dehydroquinate synthase family. The cofactor is Co(2+). Requires Zn(2+) as cofactor. NAD(+) serves as cofactor.

Its subcellular location is the cytoplasm. It carries out the reaction 7-phospho-2-dehydro-3-deoxy-D-arabino-heptonate = 3-dehydroquinate + phosphate. It participates in metabolic intermediate biosynthesis; chorismate biosynthesis; chorismate from D-erythrose 4-phosphate and phosphoenolpyruvate: step 2/7. Catalyzes the conversion of 3-deoxy-D-arabino-heptulosonate 7-phosphate (DAHP) to dehydroquinate (DHQ). The chain is 3-dehydroquinate synthase from Idiomarina loihiensis (strain ATCC BAA-735 / DSM 15497 / L2-TR).